The chain runs to 258 residues: Acyl-[acyl-carrier-protein]--UDP-N-acetylglucosamine O-acyltransferase (258 aa).

Belongs to the transferase hexapeptide repeat family. LpxA subfamily. Homotrimer.

The protein resides in the cytoplasm. It carries out the reaction a (3R)-hydroxyacyl-[ACP] + UDP-N-acetyl-alpha-D-glucosamine = a UDP-3-O-[(3R)-3-hydroxyacyl]-N-acetyl-alpha-D-glucosamine + holo-[ACP]. The protein operates within glycolipid biosynthesis; lipid IV(A) biosynthesis; lipid IV(A) from (3R)-3-hydroxytetradecanoyl-[acyl-carrier-protein] and UDP-N-acetyl-alpha-D-glucosamine: step 1/6. Its function is as follows. Involved in the biosynthesis of lipid A, a phosphorylated glycolipid that anchors the lipopolysaccharide to the outer membrane of the cell. This is Acyl-[acyl-carrier-protein]--UDP-N-acetylglucosamine O-acyltransferase from Pseudomonas savastanoi pv. phaseolicola (strain 1448A / Race 6) (Pseudomonas syringae pv. phaseolicola (strain 1448A / Race 6)).